Here is a 285-residue protein sequence, read N- to C-terminus: Small ribosomal subunit protein uS2 (285 aa).

Positions 229–285 (RHNGKSNAAEEPMAEWERELLEQHEEQKSQDAAPAEQSAPAAEAPAETEQKDAPAAE) are disordered. Over residues 243–257 (EWERELLEQHEEQKS) the composition is skewed to basic and acidic residues. Over residues 260 to 275 (AAPAEQSAPAAEAPAE) the composition is skewed to low complexity. A compositionally biased stretch (basic and acidic residues) spans 276-285 (TEQKDAPAAE).

This sequence belongs to the universal ribosomal protein uS2 family.

This Kocuria rhizophila (strain ATCC 9341 / DSM 348 / NBRC 103217 / DC2201) protein is Small ribosomal subunit protein uS2.